A 359-amino-acid chain; its full sequence is 3-dehydroquinate synthase (359 aa).

NAD(+) contacts are provided by residues 71-76, 105-109, 129-130, K142, K151, and 169-172; these read DGEQFK, GVIGD, TT, and CLQT. 3 residues coordinate Zn(2+): E184, H247, and H264.

The protein belongs to the sugar phosphate cyclases superfamily. Dehydroquinate synthase family. It depends on Co(2+) as a cofactor. Zn(2+) serves as cofactor. The cofactor is NAD(+).

The protein localises to the cytoplasm. The enzyme catalyses 7-phospho-2-dehydro-3-deoxy-D-arabino-heptonate = 3-dehydroquinate + phosphate. It functions in the pathway metabolic intermediate biosynthesis; chorismate biosynthesis; chorismate from D-erythrose 4-phosphate and phosphoenolpyruvate: step 2/7. Functionally, catalyzes the conversion of 3-deoxy-D-arabino-heptulosonate 7-phosphate (DAHP) to dehydroquinate (DHQ). This Shewanella sp. (strain MR-4) protein is 3-dehydroquinate synthase.